Here is a 97-residue protein sequence, read N- to C-terminus: Large ribosomal subunit protein bL31 (97 aa).

The tract at residues lysine 76–leucine 97 is disordered. The segment covering glycine 83–leucine 97 has biased composition (basic and acidic residues).

It belongs to the bacterial ribosomal protein bL31 family. Type A subfamily. Part of the 50S ribosomal subunit.

Functionally, binds the 23S rRNA. This chain is Large ribosomal subunit protein bL31, found in Mycoplasma pneumoniae (strain ATCC 29342 / M129 / Subtype 1) (Mycoplasmoides pneumoniae).